Consider the following 126-residue polypeptide: Large ribosomal subunit protein bL12 (126 aa).

Belongs to the bacterial ribosomal protein bL12 family. As to quaternary structure, homodimer. Part of the ribosomal stalk of the 50S ribosomal subunit. Forms a multimeric L10(L12)X complex, where L10 forms an elongated spine to which 2 to 4 L12 dimers bind in a sequential fashion. Binds GTP-bound translation factors.

Functionally, forms part of the ribosomal stalk which helps the ribosome interact with GTP-bound translation factors. Is thus essential for accurate translation. The sequence is that of Large ribosomal subunit protein bL12 from Nitrosococcus oceani (strain ATCC 19707 / BCRC 17464 / JCM 30415 / NCIMB 11848 / C-107).